The sequence spans 426 residues: Histidine--tRNA ligase (426 aa).

This sequence belongs to the class-II aminoacyl-tRNA synthetase family. In terms of assembly, homodimer.

It localises to the cytoplasm. The catalysed reaction is tRNA(His) + L-histidine + ATP = L-histidyl-tRNA(His) + AMP + diphosphate + H(+). In Streptococcus dysgalactiae subsp. equisimilis (Streptococcus equisimilis), this protein is Histidine--tRNA ligase (hisS).